The following is a 247-amino-acid chain: ATP synthase subunit a (247 aa).

Helical transmembrane passes span 24–44 (IAFT…AAMM), 82–102 (FFPL…VGII), 112–132 (IIVT…YGFY), 141–161 (LFVP…IEII), 181–201 (GHVT…LGFV), and 206–226 (ALLP…VAFL).

Belongs to the ATPase A chain family. F-type ATPases have 2 components, CF(1) - the catalytic core - and CF(0) - the membrane proton channel. CF(1) has five subunits: alpha(3), beta(3), gamma(1), delta(1), epsilon(1). CF(0) has four main subunits: a, b, b' and c.

The protein resides in the cell inner membrane. Its function is as follows. Key component of the proton channel; it plays a direct role in the translocation of protons across the membrane. The polypeptide is ATP synthase subunit a (Bradyrhizobium sp. (strain ORS 278)).